The primary structure comprises 284 residues: 4-hydroxybenzoate octaprenyltransferase (284 aa).

9 helical membrane-spanning segments follow: residues 19-39 (IGTL…AKGM), 42-62 (FDVL…GCVI), 93-113 (IVLF…MNPL), 114-134 (TIKL…MKRF), 136-156 (HLPQ…AWAA), 161-181 (LPSI…AYDT), 209-229 (LMVG…GMHY), 235-252 (FYWA…QQHL), and 264-284 (AFLN…ITFW).

This sequence belongs to the UbiA prenyltransferase family. It depends on Mg(2+) as a cofactor.

Its subcellular location is the cell inner membrane. The catalysed reaction is all-trans-octaprenyl diphosphate + 4-hydroxybenzoate = 4-hydroxy-3-(all-trans-octaprenyl)benzoate + diphosphate. The protein operates within cofactor biosynthesis; ubiquinone biosynthesis. Catalyzes the prenylation of para-hydroxybenzoate (PHB) with an all-trans polyprenyl group. Mediates the second step in the final reaction sequence of ubiquinone-8 (UQ-8) biosynthesis, which is the condensation of the polyisoprenoid side chain with PHB, generating the first membrane-bound Q intermediate 3-octaprenyl-4-hydroxybenzoate. The protein is 4-hydroxybenzoate octaprenyltransferase of Vibrio atlanticus (strain LGP32) (Vibrio splendidus (strain Mel32)).